Reading from the N-terminus, the 139-residue chain is D-ribose pyranase (139 aa).

Histidine 20 (proton donor) is an active-site residue. Substrate-binding positions include aspartate 28, histidine 106, and 128 to 130 (YAN).

This sequence belongs to the RbsD / FucU family. RbsD subfamily. In terms of assembly, homodecamer.

Its subcellular location is the cytoplasm. The enzyme catalyses beta-D-ribopyranose = beta-D-ribofuranose. It participates in carbohydrate metabolism; D-ribose degradation; D-ribose 5-phosphate from beta-D-ribopyranose: step 1/2. Catalyzes the interconversion of beta-pyran and beta-furan forms of D-ribose. The polypeptide is D-ribose pyranase (Vibrio cholerae serotype O1 (strain ATCC 39541 / Classical Ogawa 395 / O395)).